The following is a 237-amino-acid chain: MVTEQDPTTLMKQQVGKAAAEEVKSGMIVGLGTGSTTAYMIQFLGELLQRGELKDIKGIPTSFQSTVLAKKYGVPLTTLDEVDYMDIAIDGADEVDPQKNLIKGGGAAHTREKIVDCLAEKFVVVVDSSKLVDKLGSTFLLPVEVIPMAMNPVIRAIEKLGGQPEVRMGVKKAGPIVTDQGNLVIDVKFDSIDNPGELEKSLNNIPGVLENGLFVGVADVILVGEIDNGKPIVRTIS.

Substrate is bound by residues 33–36, 90–93, and 103–106; these read TGST, DGAD, and KGGG. The active-site Proton acceptor is Glu112. Position 130 (Lys130) interacts with substrate.

This sequence belongs to the ribose 5-phosphate isomerase family. As to quaternary structure, homodimer.

It catalyses the reaction aldehydo-D-ribose 5-phosphate = D-ribulose 5-phosphate. The protein operates within carbohydrate degradation; pentose phosphate pathway; D-ribose 5-phosphate from D-ribulose 5-phosphate (non-oxidative stage): step 1/1. Catalyzes the reversible conversion of ribose-5-phosphate to ribulose 5-phosphate. This is Ribose-5-phosphate isomerase A from Trichodesmium erythraeum (strain IMS101).